Here is a 287-residue protein sequence, read N- to C-terminus: uncharacterized protein (287 aa).

Transmembrane regions (helical) follow at residues 4–24 (TTNG…SLPA), 36–56 (FLTV…LLIF), 66–86 (LISL…LTAL), 93–113 (SAHA…FGVL), 122–142 (VFWI…LIQG), 148–168 (LGDA…AEGA), 179–199 (VISW…FFFT), 208–228 (VPAL…GFVF), 237–259 (GIAA…ASVI), and 264–286 (VGWA…RRFA). EamA domains are found at residues 16–139 (LIFS…GFAL) and 158–284 (VVCG…AARR).

It belongs to the EamA transporter family.

It localises to the cell membrane. This is an uncharacterized protein from Bacillus subtilis (strain 168).